Reading from the N-terminus, the 168-residue chain is MSLPNPAALISQMAADLNAHLAQRAISEPRFIGIRTGGVWVAQALLEALGSDSPLGTLDVSFYRDDFSQNGLHPQVRPSELPFEIEGQHLVLIDDVLMSGRTIRAALNELFDYGRPASVTLVCLLDLNAAELPIRPNVVGATLSLAAHERVKLSGPAPLQLELQDLAL.

The PRPP-binding signature appears at 90–102 (LVLIDDVLMSGRT).

This sequence belongs to the purine/pyrimidine phosphoribosyltransferase family. PyrR subfamily.

The enzyme catalyses UMP + diphosphate = 5-phospho-alpha-D-ribose 1-diphosphate + uracil. In terms of biological role, regulates the transcription of the pyrimidine nucleotide (pyr) operon in response to exogenous pyrimidines. Its function is as follows. Also displays a weak uracil phosphoribosyltransferase activity which is not physiologically significant. This Pseudomonas fluorescens (strain ATCC BAA-477 / NRRL B-23932 / Pf-5) protein is Bifunctional protein PyrR.